A 189-amino-acid polypeptide reads, in one-letter code: Potassium-transporting ATPase KdpC subunit (189 aa).

The helical transmembrane segment at proline 6–valine 26 threads the bilayer.

This sequence belongs to the KdpC family. As to quaternary structure, the system is composed of three essential subunits: KdpA, KdpB and KdpC.

Its subcellular location is the cell inner membrane. Part of the high-affinity ATP-driven potassium transport (or Kdp) system, which catalyzes the hydrolysis of ATP coupled with the electrogenic transport of potassium into the cytoplasm. This subunit acts as a catalytic chaperone that increases the ATP-binding affinity of the ATP-hydrolyzing subunit KdpB by the formation of a transient KdpB/KdpC/ATP ternary complex. The sequence is that of Potassium-transporting ATPase KdpC subunit from Geobacter sulfurreducens (strain ATCC 51573 / DSM 12127 / PCA).